Reading from the N-terminus, the 906-residue chain is Nuclear factor NF-kappa-B p100 subunit (906 aa).

The region spanning alanine 34 to glycine 223 is the RHD domain. The Nuclear localization signal signature appears at arginine 336–lysine 340. The segment at phenylalanine 345 to phenylalanine 374 is GRR. 6 ANK repeats span residues asparagine 472–serine 501, leucine 511–leucine 540, tyrosine 544–proline 573, glutamine 582–glycine 611, glycine 616–serine 646, and alanine 650–arginine 679. Disordered stretches follow at residues valine 677–glutamine 734 and glutamate 857–histidine 906. The segment covering proline 684–serine 695 has biased composition (low complexity). A compositionally biased stretch (acidic residues) spans threonine 697–glutamine 708. The Death domain occupies arginine 771–glutamate 857.

As to quaternary structure, component of the NF-kappa-B RelB-p52 complex. While translation occurs, the particular unfolded structure after the GRR repeat promotes the generation of p52 making it an acceptable substrate for the proteasome. This process is known as cotranslational processing. The processed form is active and the unprocessed form acts as an inhibitor (I kappa B-like), being able to form cytosolic complexes with NF-kappa B, trapping it in the cytoplasm. Complete folding of the region downstream of the GRR repeat precludes processing. Post-translationally, constitutive processing is tightly suppressed by its C-terminal processing inhibitory domain, named PID, which contains the death domain.

The protein localises to the nucleus. It localises to the cytoplasm. NF-kappa-B is a pleiotropic transcription factor present in almost all cell types and is the endpoint of a series of signal transduction events that are initiated by a vast array of stimuli related to many biological processes such as inflammation, immunity, differentiation, cell growth, tumorigenesis and apoptosis. NF-kappa-B is a homo- or heterodimeric complex formed by the Rel-like domain-containing proteins RELA/p65, RELB, NFKB1/p105, NFKB1/p50, REL and NFKB2/p52. The dimers bind at kappa-B sites in the DNA of their target genes and the individual dimers have distinct preferences for different kappa-B sites that they can bind with distinguishable affinity and specificity. Different dimer combinations act as transcriptional activators or repressors, respectively. NF-kappa-B is controlled by various mechanisms of post-translational modification and subcellular compartmentalization as well as by interactions with other cofactors or corepressors. NF-kappa-B complexes are held in the cytoplasm in an inactive state complexed with members of the NF-kappa-B inhibitor (I-kappa-B) family. In a conventional activation pathway, I-kappa-B is phosphorylated by I-kappa-B kinases (IKKs) in response to different activators, subsequently degraded thus liberating the active NF-kappa-B complex which translocates to the nucleus. In a non-canonical activation pathway, the MAP3K14-activated CHUK/IKKA homodimer phosphorylates NFKB2/p100 associated with RelB, inducing its proteolytic processing to NFKB2/p52 and the formation of NF-kappa-B RelB-p52 complexes. The NF-kappa-B heterodimeric RelB-p52 complex is a transcriptional activator. NFKB2 appears to have dual functions such as cytoplasmic retention of attached NF-kappa-B proteins by p100 and generation of p52 by a cotranslational processing. The proteasome-mediated process ensures the production of both p52 and p100 and preserves their independent function. p52 binds to the kappa-B consensus sequence 5'-GGRNNYYCC-3', located in the enhancer region of genes involved in immune response and acute phase reactions. In concert with RELB, may play a role in the regulation of the circadian clock. This chain is Nuclear factor NF-kappa-B p100 subunit (NFKB2), found in Gallus gallus (Chicken).